The following is an 89-amino-acid chain: DNA-directed RNA polymerase subunit omega (89 aa).

It belongs to the RNA polymerase subunit omega family. In terms of assembly, the RNAP catalytic core consists of 2 alpha, 1 beta, 1 beta' and 1 omega subunit. When a sigma factor is associated with the core the holoenzyme is formed, which can initiate transcription.

It catalyses the reaction RNA(n) + a ribonucleoside 5'-triphosphate = RNA(n+1) + diphosphate. Promotes RNA polymerase assembly. Latches the N- and C-terminal regions of the beta' subunit thereby facilitating its interaction with the beta and alpha subunits. The polypeptide is DNA-directed RNA polymerase subunit omega (Idiomarina loihiensis (strain ATCC BAA-735 / DSM 15497 / L2-TR)).